An 805-amino-acid chain; its full sequence is ATP-dependent RNA helicase mak-5 (805 aa).

The segment covering 1 to 10 has biased composition (basic residues); that stretch reads MAVDKKRKNT. Disordered stretches follow at residues 1–33 and 79–189; these read MAVD…KRPV and VPKS…ELET. The span at 85–100 shows a compositional bias: acidic residues; it reads EVEDDGEEFGGFDDEE. 3 stretches are compositionally biased toward basic and acidic residues: residues 110-119, 126-143, and 164-189; these read QEVKTSETKA, AKEK…EQQK, and KNAE…ELET. The Q motif signature appears at 209 to 237; that stretch reads SEWVPLDLSPRMISSIAKLRFSKPTVIQS. Residues 240-463 form the Helicase ATP-binding domain; that stretch reads IPEIMAGHDV…AGKSKFKATS (224 aa). An ATP-binding site is contributed by 253 to 260; sequence ASTGSGKT. Positions 372–375 match the DEAD box motif; that stretch reads DEAD. The span at 390–406 shows a compositional bias: basic and acidic residues; the sequence is FKALDRPPVEENNEDQK. Positions 390–435 are disordered; it reads FKALDRPPVEENNEDQKMGGTDEEGQEEEEEDSEEEEEEEEEHVNK. Acidic residues predominate over residues 410–431; the sequence is TDEEGQEEEEEDSEEEEEEEEE. The region spanning 510–666 is the Helicase C-terminal domain; it reads YLYATLMLQP…NSGNNTKKLV (157 aa). Residues 729-751 are disordered; the sequence is AGKWGGKGSSKKQKQKEAQQMSK.

Belongs to the DEAD box helicase family. DDX24/MAK5 subfamily.

It localises to the nucleus. It is found in the nucleolus. It catalyses the reaction ATP + H2O = ADP + phosphate + H(+). Its function is as follows. ATP-binding RNA helicase involved in the biogenesis of 60S ribosomal subunits and is required for the normal formation of 25S and 5.8S rRNAs. This chain is ATP-dependent RNA helicase mak-5 (mak-5), found in Neurospora crassa (strain ATCC 24698 / 74-OR23-1A / CBS 708.71 / DSM 1257 / FGSC 987).